The primary structure comprises 638 residues: DNA gyrase subunit B (638 aa).

Residues 423 to 537 (CEVYIVEGDS…KGHVYLAMPP (115 aa)) form the Toprim domain. 3 residues coordinate Mg(2+): glutamate 429, aspartate 502, and aspartate 504.

Belongs to the type II topoisomerase GyrB family. As to quaternary structure, heterotetramer, composed of two GyrA and two GyrB chains. In the heterotetramer, GyrA contains the active site tyrosine that forms a transient covalent intermediate with DNA, while GyrB binds cofactors and catalyzes ATP hydrolysis. It depends on Mg(2+) as a cofactor. Mn(2+) serves as cofactor. Ca(2+) is required as a cofactor.

The protein localises to the cytoplasm. The catalysed reaction is ATP-dependent breakage, passage and rejoining of double-stranded DNA.. Its function is as follows. A type II topoisomerase that negatively supercoils closed circular double-stranded (ds) DNA in an ATP-dependent manner to modulate DNA topology and maintain chromosomes in an underwound state. Negative supercoiling favors strand separation, and DNA replication, transcription, recombination and repair, all of which involve strand separation. Also able to catalyze the interconversion of other topological isomers of dsDNA rings, including catenanes and knotted rings. Type II topoisomerases break and join 2 DNA strands simultaneously in an ATP-dependent manner. This Treponema denticola (strain ATCC 35405 / DSM 14222 / CIP 103919 / JCM 8153 / KCTC 15104) protein is DNA gyrase subunit B.